A 275-amino-acid polypeptide reads, in one-letter code: Spermidine/putrescine transport system permease protein PotB (275 aa).

Residues 1–21 form a helical membrane-spanning segment; sequence MIVTIVGWLVLFVFLPNLMII. At 22 to 60 the chain is on the periplasmic side; that stretch reads GTSFLTRDDASFVKMVFTLDNYTRLLDPLYFEVLLHSLN. An ABC transmembrane type-1 domain is found at 55-261; the sequence is LLHSLNMALI…IVMGLMLLVY (207 aa). A helical membrane pass occupies residues 61 to 81; that stretch reads MALIATLACLVLGYPFAWFLA. At 82–89 the chain is on the cytoplasmic side; sequence KLPHKVRP. The chain crosses the membrane as a helical span at residues 90 to 110; it reads LLLFLLIVPFWTNSLIRIYGL. Over 111–135 the chain is Periplasmic; sequence KIFLSTKGYLNEFLLWLGVIDTPIR. A helical membrane pass occupies residues 136–156; that stretch reads IMFTPSAVIIGLVYILLPFMV. The Cytoplasmic portion of the chain corresponds to 157 to 187; that stretch reads MPLYSSIEKLDKPLLEAARDLGASKLQTFIR. The chain crosses the membrane as a helical span at residues 188–208; it reads IIIPLTMPGIIAGCLLVMLPA. Topologically, residues 209 to 241 are periplasmic; it reads MGLFYVSDLMGGAKNLLIGNVIKVQFLNIRDWP. Residues 242–262 form a helical membrane-spanning segment; sequence FGAATSITLTIVMGLMLLVYW. Residues 263-275 lie on the Cytoplasmic side of the membrane; the sequence is RASRLLNKKVELE.

This sequence belongs to the binding-protein-dependent transport system permease family. CysTW subfamily.

The protein localises to the cell inner membrane. Functionally, required for the activity of the bacterial periplasmic transport system of putrescine and spermidine. The chain is Spermidine/putrescine transport system permease protein PotB (potB) from Escherichia coli (strain K12).